A 923-amino-acid polypeptide reads, in one-letter code: TBC1 domain family member 2A (923 aa).

Position 1 is an N-acetylmethionine (M1). The interval 1 to 39 is disordered; it reads MDGAHENAAESSSSVPRSEEPACSAGGPEVLPPEESEGC. Positions 1–171 are interaction with CADH1; sequence MDGAHENAAE…AGNGPTLRLE (171 aa). The region spanning 47-144 is the PH domain; it reads PKKLCGYLSK…WLQQLQTKRW (98 aa). Disordered stretches follow at residues 146–166 and 232–289; these read FHSS…GNGP and RQAQ…LIQK. An interaction with RAC1 region spans residues 301–439; sequence AEGLTRTRTA…KVTWDFTHPP (139 aa). Residues 308–486 adopt a coiled-coil conformation; it reads RTAQEKILAL…LNSEIHQVTK (179 aa). One can recognise a Rab-GAP TBC domain in the interval 631 to 823; sequence GVPREHRPRV…RVWDAFLYEG (193 aa). Residues 870-904 adopt a coiled-coil conformation; sequence MKQLRQLRRAHRERLEAELHELEQLKAEYLETQSS. The tract at residues 900–923 is disordered; the sequence is ETQSSRGPAVPDGCTSEDEGEGEA. Positions 914-923 are enriched in acidic residues; the sequence is TSEDEGEGEA. Residue S915 is modified to Phosphoserine.

In terms of assembly, interacts with activated RAC1 and CDH1.

It is found in the cytoplasm. The protein localises to the cytoplasmic vesicle. It localises to the cell junction. Functionally, acts as a GTPase-activating protein for RAB7A. Signal effector acting as a linker between RAC1 and RAB7A, leading to RAB7A inactivation and subsequent inhibition of cadherin degradation and reduced cell-cell adhesion. This Ailuropoda melanoleuca (Giant panda) protein is TBC1 domain family member 2A (TBC1D2).